Reading from the N-terminus, the 408-residue chain is 3-hydroxy-3-methylglutaryl-coenzyme A reductase (408 aa).

Residues E101 and D307 each act as charge relay system in the active site. The active-site Proton donor is the H403.

It belongs to the HMG-CoA reductase family.

It carries out the reaction (R)-mevalonate + 2 NADP(+) + CoA = (3S)-3-hydroxy-3-methylglutaryl-CoA + 2 NADPH + 2 H(+). Its pathway is metabolic intermediate biosynthesis; (R)-mevalonate biosynthesis; (R)-mevalonate from acetyl-CoA: step 3/3. In terms of biological role, converts HMG-CoA to mevalonate. The sequence is that of 3-hydroxy-3-methylglutaryl-coenzyme A reductase (hmgA) from Pyrococcus abyssi (strain GE5 / Orsay).